We begin with the raw amino-acid sequence, 1131 residues long: MLHVSASKNMTEYFKSILNDVNNLYFIAEECRKLGYDVVDKVEIPLAKDMADRVEGIVGPPKVSERIRELVMELGKEPAALEIAKEIVEGRFGEFGKEEGAEQAVRTALAVITEGIVAAPLEGIAHVKIKKNHDGTEYLAIYFAGPIRSAGGTAQALAVLVGDYVRKNMNLDKFKPTDDEVERYGEEIDLYQSEVTTFQYQPKIEEIRTAVRNISVEITGEATDDVEVSGHRDLERVETNQIRGGALLALVEGVLLKAPKILRHVDKLEIEGWNWLKELKNKKEEINEDIKDEKEDFNYEEEEDLSQYDDCEIEEVTKFIGEVIAGRPVFAHPSKKGGFRLRYGRSRNTGFATDGFHPAIMYLVDDFMAVGTQLKTERPGKATCVVPVDSIDPPIVKLNNHSVLKIDTVEKAIKYRKDVLEILFLGDILVNYGDFLENNHVMLPSSWCVEWYEKILKVNNIPYSTEFISNPSPKEAVKFAITTKTPLHPVYTYHWHDISKENIYSLRNWILRGNFNKNSDKWEISYDLENPEDISNKRFLELIGCCHEVVDGKIFILEYYPLLYSLGYDYENSFDSVENLEEKVSNAKNNMHLINLLSHFEIRRNTYIYVGARMGRPEKAASRKMKPPVNGLFPIGNAGALVRLINKAVEGGKTDEIEISNVMCSCGKVSLYKKCPFCGKSVIPTGPTRIKLPIKDYWYNALENLKINKPGDVKCIKGMTSKDKIIEPLEKAILRAVNDVYVFKDGTTRFDCTDVPVTHFKPCEINVSVNRLKELGYLRDINGNSLENDKQVLELKVQDVIVPESCMDYFLNVSKFIDDLLEKYYKKNRYYNSSNKEDLVGHLIIGMAPHTSAGMVGRIVGYSKANVGYAHPYFHASKRRNCDGDEDAFFLLLDAFLNFSKKFLPDKRGGQMDAPLVLTTILDPKEVDGEVHNMDSMWEYPLEFYEKSLEMVTPKEIKKLMETVEDRLGKDEQYEGIGYTHETLKIDEGPLICSYKTLGSMMDKTSAQLAVAKKIRATDERDVAEKVIQSHFVPDLIGNLRAFSRQGVRCKCGAKYRRIPLKGVCRKCGSRLILTVSKGAVEKYMNVSQTMAEKYNVSDYIKQRLEIIRSGIDSLFTNDKRKQVKIEDFFK.

This sequence belongs to the archaeal DNA polymerase II family. In terms of assembly, heterodimer of a large subunit and a small subunit.

The enzyme catalyses DNA(n) + a 2'-deoxyribonucleoside 5'-triphosphate = DNA(n+1) + diphosphate. It catalyses the reaction Exonucleolytic cleavage in the 3'- to 5'-direction to yield nucleoside 5'-phosphates.. In terms of biological role, possesses two activities: a DNA synthesis (polymerase) and an exonucleolytic activity that degrades single-stranded DNA in the 3'- to 5'-direction. Has a template-primer preference which is characteristic of a replicative DNA polymerase. This Methanococcus vannielii (strain ATCC 35089 / DSM 1224 / JCM 13029 / OCM 148 / SB) protein is DNA polymerase II large subunit.